Reading from the N-terminus, the 157-residue chain is Crossover junction endodeoxyribonuclease RuvC (157 aa).

Residues Asp7, Glu67, and Asp140 contribute to the active site. Mg(2+) contacts are provided by Asp7, Glu67, and Asp140.

Belongs to the RuvC family. In terms of assembly, homodimer which binds Holliday junction (HJ) DNA. The HJ becomes 2-fold symmetrical on binding to RuvC with unstacked arms; it has a different conformation from HJ DNA in complex with RuvA. In the full resolvosome a probable DNA-RuvA(4)-RuvB(12)-RuvC(2) complex forms which resolves the HJ. Requires Mg(2+) as cofactor.

Its subcellular location is the cytoplasm. The enzyme catalyses Endonucleolytic cleavage at a junction such as a reciprocal single-stranded crossover between two homologous DNA duplexes (Holliday junction).. Functionally, the RuvA-RuvB-RuvC complex processes Holliday junction (HJ) DNA during genetic recombination and DNA repair. Endonuclease that resolves HJ intermediates. Cleaves cruciform DNA by making single-stranded nicks across the HJ at symmetrical positions within the homologous arms, yielding a 5'-phosphate and a 3'-hydroxyl group; requires a central core of homology in the junction. The consensus cleavage sequence is 5'-(A/T)TT(C/G)-3'. Cleavage occurs on the 3'-side of the TT dinucleotide at the point of strand exchange. HJ branch migration catalyzed by RuvA-RuvB allows RuvC to scan DNA until it finds its consensus sequence, where it cleaves and resolves the cruciform DNA. The polypeptide is Crossover junction endodeoxyribonuclease RuvC (Rickettsia bellii (strain OSU 85-389)).